The sequence spans 1135 residues: Phytochrome C (1135 aa).

Residues 1–11 (MSSPLNNRGTC) are compositionally biased toward polar residues. Residues 1-26 (MSSPLNNRGTCSRSSSARSRHSARVV) are disordered. One can recognise a GAF domain in the interval 216-399 (NLSLLCDVLV…VFGIQLNKEV (184 aa)). Residue Cys321 participates in phytochromobilin binding. 2 PAS domains span residues 618–688 (VTNE…LQGI) and 748–822 (IQGD…TKLS). Residues 902 to 1122 (YIHQELRNPL…IILIEFPVAQ (221 aa)) form the Histidine kinase domain.

Belongs to the phytochrome family. Homodimer. Post-translationally, contains one covalently linked phytochromobilin chromophore.

Its function is as follows. Regulatory photoreceptor which exists in two forms that are reversibly interconvertible by light: the Pr form that absorbs maximally in the red region of the spectrum and the Pfr form that absorbs maximally in the far-red region. Photoconversion of Pr to Pfr induces an array of morphogenic responses, whereas reconversion of Pfr to Pr cancels the induction of those responses. Pfr controls the expression of a number of nuclear genes including those encoding the small subunit of ribulose-bisphosphate carboxylase, chlorophyll A/B binding protein, protochlorophyllide reductase, rRNA, etc. It also controls the expression of its own gene(s) in a negative feedback fashion. This is Phytochrome C (PHYC) from Sorghum bicolor (Sorghum).